Here is a 931-residue protein sequence, read N- to C-terminus: Envelope glycoprotein B (931 aa).

Residues 1–71 (MSPCGYYSKW…FSMFVTAVVS (71 aa)) form the signal peptide. Over 72–786 (VSPSSFYESL…HGFTTFLSNP (715 aa)) the chain is Virion surface. 5 disulfide bridges follow: Cys-122-Cys-584, Cys-139-Cys-540, Cys-213-Cys-277, Cys-369-Cys-417, and Cys-608-Cys-645. Residue Asn-147 is glycosylated (N-linked (GlcNAc...) asparagine; by host). The involved in fusion and/or binding to host membrane stretch occupies residues 179–185 (AWAGSSY). A glycan (N-linked (GlcNAc...) asparagine; by host) is linked at Asn-257. The tract at residues 264-271 (GTPGTYRT) is involved in fusion and/or binding to host membrane. Asn-435, Asn-503, Asn-620, and Asn-686 each carry an N-linked (GlcNAc...) asparagine; by host glycan. Hydrophobic membrane proximal region regions lie at residues 731 to 784 (IDKV…TFLS) and 764 to 784 (VVLGATGALLSTVHGFTTFLS). A helical transmembrane segment spans residues 787-807 (FGALAVGLLVLAGLVAAFFAY). Over 808–931 (RYVLKLKTSP…RVRTENVTGV (124 aa)) the chain is Intravirion. The short motif at 881 to 884 (YMTL) is the Golgi targeting element. Positions 904 to 906 (LLT) match the Di-leucine internalization motif motif. Residues 920–923 (YSRV) carry the Internalization motif motif.

It belongs to the herpesviridae glycoprotein B family. In terms of assembly, homotrimer; disulfide-linked. Binds to heparan sulfate proteoglycans. Interacts with gH/gL heterodimer. Interacts with gE. In terms of processing, a proteolytic cleavage by host furin generates two subunits that remain linked by disulfide bonds.

It localises to the virion membrane. It is found in the host cell membrane. The protein resides in the host endosome membrane. The protein localises to the host Golgi apparatus membrane. Its function is as follows. Envelope glycoprotein that forms spikes at the surface of virion envelope. Essential for the initial attachment to heparan sulfate moieties of the host cell surface proteoglycans. Involved in fusion of viral and cellular membranes leading to virus entry into the host cell. Following initial binding to its host receptors, membrane fusion is mediated by the fusion machinery composed at least of gB and the heterodimer gH/gL. May be involved in the fusion between the virion envelope and the outer nuclear membrane during virion egress. In Varicella-zoster virus (strain Dumas) (HHV-3), this protein is Envelope glycoprotein B.